Reading from the N-terminus, the 377-residue chain is Succinyl-diaminopimelate desuccinylase (377 aa).

Position 71 (His-71) interacts with Zn(2+). The active site involves Asp-73. Asp-102 serves as a coordination point for Zn(2+). The Proton acceptor role is filled by Glu-132. Zn(2+)-binding residues include Glu-133, Glu-161, and His-346.

This sequence belongs to the peptidase M20A family. DapE subfamily. In terms of assembly, homodimer. Requires Zn(2+) as cofactor. It depends on Co(2+) as a cofactor.

It carries out the reaction N-succinyl-(2S,6S)-2,6-diaminopimelate + H2O = (2S,6S)-2,6-diaminopimelate + succinate. It participates in amino-acid biosynthesis; L-lysine biosynthesis via DAP pathway; LL-2,6-diaminopimelate from (S)-tetrahydrodipicolinate (succinylase route): step 3/3. Catalyzes the hydrolysis of N-succinyl-L,L-diaminopimelic acid (SDAP), forming succinate and LL-2,6-diaminopimelate (DAP), an intermediate involved in the bacterial biosynthesis of lysine and meso-diaminopimelic acid, an essential component of bacterial cell walls. The polypeptide is Succinyl-diaminopimelate desuccinylase (Rhizorhabdus wittichii (strain DSM 6014 / CCUG 31198 / JCM 15750 / NBRC 105917 / EY 4224 / RW1) (Sphingomonas wittichii)).